The chain runs to 316 residues: Ribose-phosphate pyrophosphokinase (316 aa).

Residues 41–43 (DGE) and 100–101 (RQ) contribute to the ATP site. Mg(2+) contacts are provided by His134 and Asp175. Lys198 is a catalytic residue. D-ribose 5-phosphate contacts are provided by residues Arg200, Asp224, and 228 to 232 (DTARS).

It belongs to the ribose-phosphate pyrophosphokinase family. Class I subfamily. Homohexamer. Mg(2+) is required as a cofactor.

Its subcellular location is the cytoplasm. The enzyme catalyses D-ribose 5-phosphate + ATP = 5-phospho-alpha-D-ribose 1-diphosphate + AMP + H(+). It functions in the pathway metabolic intermediate biosynthesis; 5-phospho-alpha-D-ribose 1-diphosphate biosynthesis; 5-phospho-alpha-D-ribose 1-diphosphate from D-ribose 5-phosphate (route I): step 1/1. In terms of biological role, involved in the biosynthesis of the central metabolite phospho-alpha-D-ribosyl-1-pyrophosphate (PRPP) via the transfer of pyrophosphoryl group from ATP to 1-hydroxyl of ribose-5-phosphate (Rib-5-P). This chain is Ribose-phosphate pyrophosphokinase, found in Thermosipho africanus (strain TCF52B).